The primary structure comprises 477 residues: Endogenous retrovirus group V member 1 Env polyprotein (477 aa).

A signal peptide spans 1 to 21 (MTEKFLFLYLSLLPMPLLSQA). Topologically, residues 22-321 (QWNENSLVSF…NTTQPRQKRA (300 aa)) are extracellular. Asparagine 68 carries N-linked (GlcNAc...) asparagine glycosylation. Residues 322-342 (LGLILAGMGAAIGMIAPWGGF) form a helical membrane-spanning segment. The Cytoplasmic segment spans residues 343–477 (TYHDVTLRNL…LLSPLWPLSL (135 aa)).

It belongs to the gamma type-C retroviral envelope protein family. Expressed in placenta.

It localises to the membrane. The sequence is that of Endogenous retrovirus group V member 1 Env polyprotein (ERVV-1) from Homo sapiens (Human).